We begin with the raw amino-acid sequence, 429 residues long: Histidinol dehydrogenase (429 aa).

The NAD(+) site is built by Tyr131, Gln193, and Asn216. Substrate is bound by residues Ser239, Gln261, and His264. Zn(2+) contacts are provided by Gln261 and His264. Catalysis depends on proton acceptor residues Glu327 and His328. Positions 328, 361, 415, and 420 each coordinate substrate. Asp361 lines the Zn(2+) pocket. His420 is a Zn(2+) binding site.

This sequence belongs to the histidinol dehydrogenase family. Zn(2+) serves as cofactor.

The catalysed reaction is L-histidinol + 2 NAD(+) + H2O = L-histidine + 2 NADH + 3 H(+). Its pathway is amino-acid biosynthesis; L-histidine biosynthesis; L-histidine from 5-phospho-alpha-D-ribose 1-diphosphate: step 9/9. Functionally, catalyzes the sequential NAD-dependent oxidations of L-histidinol to L-histidinaldehyde and then to L-histidine. This is Histidinol dehydrogenase (hisD) from Methanocaldococcus jannaschii (strain ATCC 43067 / DSM 2661 / JAL-1 / JCM 10045 / NBRC 100440) (Methanococcus jannaschii).